Reading from the N-terminus, the 337-residue chain is Ornithine carbamoyltransferase (337 aa).

Carbamoyl phosphate-binding positions include Ser57–Thr60, Gln84, Arg108, and His135–Gln138. L-ornithine contacts are provided by residues Asn167, Asp231, and Ser235–Met236. Residues Cys272–Leu273 and Arg317 contribute to the carbamoyl phosphate site.

This sequence belongs to the aspartate/ornithine carbamoyltransferase superfamily. OTCase family.

It is found in the cytoplasm. It carries out the reaction carbamoyl phosphate + L-ornithine = L-citrulline + phosphate + H(+). It participates in amino-acid degradation; L-arginine degradation via ADI pathway; carbamoyl phosphate from L-arginine: step 2/2. Reversibly catalyzes the transfer of the carbamoyl group from carbamoyl phosphate (CP) to the N(epsilon) atom of ornithine (ORN) to produce L-citrulline. This is Ornithine carbamoyltransferase from Streptococcus equi subsp. equi (strain 4047).